The primary structure comprises 237 residues: 7-cyano-7-deazaguanine synthase (237 aa).

Tyr9 to Leu19 serves as a coordination point for ATP. Positions 189, 199, 202, and 205 each coordinate Zn(2+).

The protein belongs to the QueC family. Zn(2+) is required as a cofactor.

The catalysed reaction is 7-carboxy-7-deazaguanine + NH4(+) + ATP = 7-cyano-7-deazaguanine + ADP + phosphate + H2O + H(+). It functions in the pathway purine metabolism; 7-cyano-7-deazaguanine biosynthesis. Functionally, catalyzes the ATP-dependent conversion of 7-carboxy-7-deazaguanine (CDG) to 7-cyano-7-deazaguanine (preQ(0)). The chain is 7-cyano-7-deazaguanine synthase from Geobacter metallireducens (strain ATCC 53774 / DSM 7210 / GS-15).